A 168-amino-acid chain; its full sequence is Large ribosomal subunit protein uL10 (168 aa).

This sequence belongs to the universal ribosomal protein uL10 family. In terms of assembly, part of the ribosomal stalk of the 50S ribosomal subunit. The N-terminus interacts with L11 and the large rRNA to form the base of the stalk. The C-terminus forms an elongated spine to which L12 dimers bind in a sequential fashion forming a multimeric L10(L12)X complex.

In terms of biological role, forms part of the ribosomal stalk, playing a central role in the interaction of the ribosome with GTP-bound translation factors. This is Large ribosomal subunit protein uL10 from Paracidovorax citrulli (strain AAC00-1) (Acidovorax citrulli).